The following is a 423-amino-acid chain: Mannose-6-phosphate isomerase (423 aa).

Ala-2 carries the N-acetylalanine modification. 2 positions are modified to phosphoserine: Ser-102 and Ser-108. Zn(2+) contacts are provided by Gln-110, His-112, Glu-137, and His-276. The active site involves Arg-295.

It belongs to the mannose-6-phosphate isomerase type 1 family. The cofactor is Zn(2+).

It is found in the cytoplasm. The catalysed reaction is D-mannose 6-phosphate = D-fructose 6-phosphate. Its pathway is nucleotide-sugar biosynthesis; GDP-alpha-D-mannose biosynthesis; alpha-D-mannose 1-phosphate from D-fructose 6-phosphate: step 1/2. In terms of biological role, isomerase that catalyzes the interconversion of fructose-6-P and mannose-6-P and has a critical role in the supply of D-mannose derivatives required for many eukaryotic glycosylation reactions. The polypeptide is Mannose-6-phosphate isomerase (Rattus norvegicus (Rat)).